We begin with the raw amino-acid sequence, 150 residues long: UPF0178 protein BceJ2315_16760 (150 aa).

It belongs to the UPF0178 family.

The polypeptide is UPF0178 protein BceJ2315_16760 (Burkholderia cenocepacia (strain ATCC BAA-245 / DSM 16553 / LMG 16656 / NCTC 13227 / J2315 / CF5610) (Burkholderia cepacia (strain J2315))).